The chain runs to 74 residues: Control protein C.MunI (74 aa).

Residues 12 to 67 enclose the HTH cro/C1-type domain; the sequence is LKKLRKEKTDLSQESFAAQIDLDRTYYSSIENGKRNVSLVNLEKISAGLGITLSEL. The segment at residues 23–42 is a DNA-binding region (H-T-H motif); the sequence is SQESFAAQIDLDRTYYSSIE.

Its function is as follows. Probably controls expression of its associated restriction-modification system MunI. This is Control protein C.MunI from Mycoplasma sp.